A 210-amino-acid chain; its full sequence is A-kinase-interacting protein 1 (210 aa).

Disordered regions lie at residues 58 to 80 and 136 to 162; these read HLEK…ERPP and QRKD…EASQ.

In terms of assembly, interacts with PRKACA and RELA. Expressed at high levels in adult heart and at lower levels in brain, testis, ovary and skeletal muscle. Up-regulated in some breast cancer cell lines. Isoform 1 and isoform 3 are expressed in fetal brain.

The protein resides in the nucleus. Enhances NF-kappa-B transcriptional activity by regulating the nuclear localization of the NF-kappa-B subunit RELA and promoting the phosphorylation of RELA by PRKACA. Regulates the effect of the cAMP-dependent protein kinase signaling pathway on the NF-kappa-B activation cascade. The polypeptide is A-kinase-interacting protein 1 (AKIP1) (Homo sapiens (Human)).